The sequence spans 417 residues: NADH-quinone oxidoreductase subunit D (417 aa).

The protein belongs to the complex I 49 kDa subunit family. As to quaternary structure, NDH-1 is composed of 14 different subunits. Subunits NuoB, C, D, E, F, and G constitute the peripheral sector of the complex.

The protein localises to the cell inner membrane. The enzyme catalyses a quinone + NADH + 5 H(+)(in) = a quinol + NAD(+) + 4 H(+)(out). NDH-1 shuttles electrons from NADH, via FMN and iron-sulfur (Fe-S) centers, to quinones in the respiratory chain. The immediate electron acceptor for the enzyme in this species is believed to be ubiquinone. Couples the redox reaction to proton translocation (for every two electrons transferred, four hydrogen ions are translocated across the cytoplasmic membrane), and thus conserves the redox energy in a proton gradient. The protein is NADH-quinone oxidoreductase subunit D of Burkholderia thailandensis (strain ATCC 700388 / DSM 13276 / CCUG 48851 / CIP 106301 / E264).